Reading from the N-terminus, the 161-residue chain is Shikimate kinase (161 aa).

10–15 contacts ATP; the sequence is GAGKTT. Mg(2+) is bound at residue Thr14. Substrate-binding residues include Asp28, Arg52, and Gly74. Position 114 (Arg114) interacts with ATP. Arg132 provides a ligand contact to substrate.

Belongs to the shikimate kinase family. As to quaternary structure, monomer. Mg(2+) is required as a cofactor.

The protein localises to the cytoplasm. The catalysed reaction is shikimate + ATP = 3-phosphoshikimate + ADP + H(+). It functions in the pathway metabolic intermediate biosynthesis; chorismate biosynthesis; chorismate from D-erythrose 4-phosphate and phosphoenolpyruvate: step 5/7. Functionally, catalyzes the specific phosphorylation of the 3-hydroxyl group of shikimic acid using ATP as a cosubstrate. This Streptococcus gordonii (strain Challis / ATCC 35105 / BCRC 15272 / CH1 / DL1 / V288) protein is Shikimate kinase.